The following is a 171-amino-acid chain: uncharacterized protein (171 aa).

2 disordered regions span residues 27 to 53 (DCPG…KMVL) and 82 to 108 (GHLE…PSSS). Polar residues predominate over residues 32 to 50 (GNNNREPSISTRGRTSSSK).

This is an uncharacterized protein from Homo sapiens (Human).